Here is a 589-residue protein sequence, read N- to C-terminus: Serine/threonine-protein kinase PknJ (589 aa).

The Cytoplasmic portion of the chain corresponds to 1–342; that stretch reads MAHELSAGSV…LPRRPRRYRR (342 aa). The Protein kinase domain occupies 14–276; that stretch reads YRIERMLGAG…SAGEFAHAAA (263 aa). Residues 20-28 and Lys-43 each bind ATP; that span reads LGAGGMGTV. The active-site Proton acceptor is Asp-136. Residues 343–363 traverse the membrane as a helical segment; it reads GVAAVAAVMVVAAAAVTAVTM. The Extracellular portion of the chain corresponds to 364-589; it reads TSHQPRTATP…TNYILAKIPG (226 aa). Positions 365–387 are enriched in low complexity; that stretch reads SHQPRTATPPSAAALSPTSSSTT. The interval 365–400 is disordered; the sequence is SHQPRTATPPSAAALSPTSSSTTPPQPPIVTRSRLP.

It belongs to the protein kinase superfamily. Ser/Thr protein kinase family. As to quaternary structure, homodimer.

It localises to the cell membrane. The enzyme catalyses L-seryl-[protein] + ATP = O-phospho-L-seryl-[protein] + ADP + H(+). It carries out the reaction L-threonyl-[protein] + ATP = O-phospho-L-threonyl-[protein] + ADP + H(+). The polypeptide is Serine/threonine-protein kinase PknJ (pknJ) (Mycobacterium bovis (strain ATCC BAA-935 / AF2122/97)).